The following is a 154-amino-acid chain: Ribonuclease P protein subunit p21 (154 aa).

The residue at position 2 (alanine 2) is an N-acetylalanine. Positions 62, 65, 92, and 95 each coordinate Zn(2+). Residues 112 to 154 (DRPEAQLGNQADSKPLQPLPNTAHSISDHLPEEKMQIQGSSDQ) form a disordered region. Residues 137–146 (ISDHLPEEKM) show a composition bias toward basic and acidic residues.

The protein belongs to the eukaryotic/archaeal RNase P protein component 4 family. In terms of assembly, RNase P consists of a catalytic RNA moiety and about 10 protein subunits; POP1, POP4, POP5, POP7, RPP14, RPP21, RPP25, RPP30, RPP38 and RPP40. Within the RNase P complex, POP1, POP7 and RPP25 form the 'finger' subcomplex, POP5, RPP14, RPP40 and homodimeric RPP30 form the 'palm' subcomplex, and RPP21, POP4 and RPP38 form the 'wrist' subcomplex. All subunits of the RNase P complex interact with the catalytic RNA.

Its subcellular location is the nucleus. The protein resides in the nucleolus. In terms of biological role, component of ribonuclease P, a ribonucleoprotein complex that generates mature tRNA molecules by cleaving their 5'-ends. This is Ribonuclease P protein subunit p21 (RPP21) from Macaca mulatta (Rhesus macaque).